A 196-amino-acid polypeptide reads, in one-letter code: Large ribosomal subunit protein bL9 (196 aa).

The segment at 172-196 is disordered; sequence NESARPEAFFDPEAEIEQEEGEENA. Over residues 181–196 the composition is skewed to acidic residues; sequence FDPEAEIEQEEGEENA.

Belongs to the bacterial ribosomal protein bL9 family.

In terms of biological role, binds to the 23S rRNA. This is Large ribosomal subunit protein bL9 from Chelativorans sp. (strain BNC1).